The following is a 205-amino-acid chain: Polyamine-modulated factor 1 (205 aa).

Residues 1–30 form a disordered region; the sequence is MAEASSANLGSGCEEKRHEGSSSESVPPGT. Residues 141–193 are a coiled coil; that stretch reads FLQQRDTLRRHVQKQEAENQQLADAVLAGRRQVEELQLQVQAQQQAWQALHRE.

As to quaternary structure, component of the MIS12 complex composed of MIS12, DSN1, NSL1 and PMF1. Interacts with COPS7A. Interacts via its coiled-coil domain with the leucine-zipper domain of NFE2L2. The interaction with NFE2L2 is required for the transcriptional regulation of SSAT. In terms of tissue distribution, highest levels of expression in heart and skeletal muscle, with significant levels expressed in kidney and liver.

The protein resides in the nucleus. The protein localises to the chromosome. Its subcellular location is the centromere. It is found in the kinetochore. Functionally, part of the MIS12 complex which is required for normal chromosome alignment and segregation and kinetochore formation during mitosis. May act as a cotranscription partner of NFE2L2 involved in regulation of polyamine-induced transcription of SSAT. In Homo sapiens (Human), this protein is Polyamine-modulated factor 1.